Reading from the N-terminus, the 253-residue chain is Ribonuclease HII (253 aa).

Residues 70–253 (NLIAGIDEVG…KSFEPIKSML (184 aa)) enclose the RNase H type-2 domain. The a divalent metal cation site is built by D76, E77, and D168.

Belongs to the RNase HII family. Requires Mn(2+) as cofactor. Mg(2+) serves as cofactor.

Its subcellular location is the cytoplasm. The enzyme catalyses Endonucleolytic cleavage to 5'-phosphomonoester.. Endonuclease that specifically degrades the RNA of RNA-DNA hybrids. This Streptococcus agalactiae serotype III (strain NEM316) protein is Ribonuclease HII.